The primary structure comprises 377 residues: Adaptive-response sensory kinase SasA (377 aa).

A Histidine kinase domain is found at 154 to 373 (MLVHDLRSPL…SFHFTLPVYR (220 aa)). Histidine 157 carries the phosphohistidine; by autocatalysis modification.

In terms of assembly, homooligomerizes. Interacts with KaiC. Participates in the KaiABC clock complex, whose core is composed of a KaiC homohexamer, 6 KaiB and up to 6 KaiA dimers. SasA and KaiB(fs) compete to bind to KaiC.

It carries out the reaction ATP + protein L-histidine = ADP + protein N-phospho-L-histidine.. Member of the two-component regulatory system SasA/RpaA involved in genome-wide circadian gene expression. One of several clock output pathways. Participates in the Kai clock protein complex, the main circadian regulator in cyanobacteria, via its interaction with KaiC. KaiC enhances the autophosphorylation activity of SasA, which then transfers its phosphate group to RpaA to activate it. In addition to its output function, recruits fold-shifted KaiB (KaiB(fs)) to KaiC to cooperatively form the KaiB(6):KaiC(6) complex (independent of SasA kinase activity). Required for robustness of the circadian rhythm of gene expression and is involved in clock output, also required for adaptation to light/dark cycles. This chain is Adaptive-response sensory kinase SasA, found in Synechococcus sp. (strain JA-3-3Ab) (Cyanobacteria bacterium Yellowstone A-Prime).